Here is a 259-residue protein sequence, read N- to C-terminus: Type III pantothenate kinase (259 aa).

D9 to K16 lines the ATP pocket. Substrate contacts are provided by residues Y93 and G100–R103. The active-site Proton acceptor is D102. Residue T126 coordinates ATP. T190 is a binding site for substrate.

Belongs to the type III pantothenate kinase family. As to quaternary structure, homodimer. It depends on NH4(+) as a cofactor. The cofactor is K(+).

It is found in the cytoplasm. The enzyme catalyses (R)-pantothenate + ATP = (R)-4'-phosphopantothenate + ADP + H(+). Its pathway is cofactor biosynthesis; coenzyme A biosynthesis; CoA from (R)-pantothenate: step 1/5. Its function is as follows. Catalyzes the phosphorylation of pantothenate (Pan), the first step in CoA biosynthesis. This chain is Type III pantothenate kinase, found in Burkholderia pseudomallei (strain K96243).